A 549-amino-acid polypeptide reads, in one-letter code: Oxygen-dependent choline dehydrogenase (549 aa).

4–33 lines the FAD pocket; that stretch reads DFVIIGSGSAGSAMAYRLSENGRYSVIVIE. Residue His-465 is the Proton acceptor of the active site.

The protein belongs to the GMC oxidoreductase family. The cofactor is FAD.

The enzyme catalyses choline + A = betaine aldehyde + AH2. It carries out the reaction betaine aldehyde + NAD(+) + H2O = glycine betaine + NADH + 2 H(+). The protein operates within amine and polyamine biosynthesis; betaine biosynthesis via choline pathway; betaine aldehyde from choline (cytochrome c reductase route): step 1/1. Involved in the biosynthesis of the osmoprotectant glycine betaine. Catalyzes the oxidation of choline to betaine aldehyde and betaine aldehyde to glycine betaine at the same rate. This is Oxygen-dependent choline dehydrogenase from Brucella suis biovar 1 (strain 1330).